Here is a 445-residue protein sequence, read N- to C-terminus: UNC93-like protein MFSD11 (445 aa).

A helical transmembrane segment spans residues 8-28 (LLNIIILGIGFMFMFTAFQTS). N-linked (GlcNAc...) asparagine glycosylation occurs at Asn-40. 4 helical membrane-spanning segments follow: residues 53–73 (AIIYSVFSASNLIAPSIVAVI), 74–94 (GCQMSMFLSGLLYSAYIAMFI), 98–118 (TWSFYTLSVLIGIAAAVLWTA), and 138–158 (IFWALLQFSMLFGNLFIYLAW). N-linked (GlcNAc...) asparagine glycosylation is present at Asn-163. 7 helical membrane passes run 170-190 (RTVFIALTVISLVGSVLFFLI), 239-259 (MLLLSILVAYTGLELTFYSGV), 277-297 (LIGLSGIFVGLGEVLGGGLFG), 309-329 (PVVILGVVVHFLAFYMIYLYM), 345-365 (AFINPSKTIALACSFLLGLGD), 385-405 (APAFAVFKFVQSVSAAVAFFY), and 415-435 (LLILVIFGFFGTISFFFVEWG).

The protein belongs to the unc-93 family.

The protein localises to the membrane. This chain is UNC93-like protein MFSD11 (mfsd11), found in Xenopus tropicalis (Western clawed frog).